A 69-amino-acid chain; its full sequence is Proteinase inhibitor (69 aa).

Ser1 is modified (N-acetylserine). An intrachain disulfide couples Cys4 to Cys49.

Its function is as follows. In vitro, strong inhibitor of bovine beta-trypsin, weak inhibitor of alpha-chymotrypsin, subtilisin BPN', subtilisin Carlsberg and cathepsin G. The polypeptide is Proteinase inhibitor (Linum usitatissimum (Flax)).